The sequence spans 226 residues: EEF1A lysine methyltransferase 1 (226 aa).

Serine 2 carries the N-acetylserine modification. Serine 2 carries the post-translational modification Phosphoserine.

The protein belongs to the class I-like SAM-binding methyltransferase superfamily. EFM5 family.

It is found in the cytoplasm. It catalyses the reaction L-lysyl-[protein] + 3 S-adenosyl-L-methionine = N(6),N(6),N(6)-trimethyl-L-lysyl-[protein] + 3 S-adenosyl-L-homocysteine + 3 H(+). Protein-lysine methyltransferase that selectively catalyzes the trimethylation of EEF1A at 'Lys-79'. This chain is EEF1A lysine methyltransferase 1, found in Bos taurus (Bovine).